The primary structure comprises 155 residues: Aspartate carbamoyltransferase regulatory chain (155 aa).

Zn(2+) contacts are provided by C109, C114, C138, and C141.

The protein belongs to the PyrI family. Contains catalytic and regulatory chains. Zn(2+) is required as a cofactor.

Involved in allosteric regulation of aspartate carbamoyltransferase. The polypeptide is Aspartate carbamoyltransferase regulatory chain (Vibrio cholerae serotype O1 (strain ATCC 39315 / El Tor Inaba N16961)).